The sequence spans 317 residues: Acetyl-coenzyme A carboxylase carboxyl transferase subunit alpha (317 aa).

The CoA carboxyltransferase C-terminal domain occupies 40–293 (LEGRVRDAMV…EAVIGDALKE (254 aa)).

This sequence belongs to the AccA family. As to quaternary structure, acetyl-CoA carboxylase is a heterohexamer composed of biotin carboxyl carrier protein (AccB), biotin carboxylase (AccC) and two subunits each of ACCase subunit alpha (AccA) and ACCase subunit beta (AccD).

The protein localises to the cytoplasm. It catalyses the reaction N(6)-carboxybiotinyl-L-lysyl-[protein] + acetyl-CoA = N(6)-biotinyl-L-lysyl-[protein] + malonyl-CoA. Its pathway is lipid metabolism; malonyl-CoA biosynthesis; malonyl-CoA from acetyl-CoA: step 1/1. Its function is as follows. Component of the acetyl coenzyme A carboxylase (ACC) complex. First, biotin carboxylase catalyzes the carboxylation of biotin on its carrier protein (BCCP) and then the CO(2) group is transferred by the carboxyltransferase to acetyl-CoA to form malonyl-CoA. The polypeptide is Acetyl-coenzyme A carboxylase carboxyl transferase subunit alpha (Sinorhizobium medicae (strain WSM419) (Ensifer medicae)).